We begin with the raw amino-acid sequence, 414 residues long: Collagenase (414 aa).

It belongs to the peptidase U32 family. In terms of assembly, homodimer. The cofactor is a metal cation.

Has collagenase activity. Hydrolyzes type I collagen. May play a role in virulence. The polypeptide is Collagenase (prtC) (Porphyromonas gingivalis (strain ATCC BAA-308 / W83)).